Consider the following 505-residue polypeptide: MFS efflux pump atnC (505 aa).

The next 12 helical transmembrane spans lie at Val48–Val68, Leu117–Gly137, Val148–Trp168, Leu181–Ala201, Leu216–Ala236, Trp240–Leu260, Val304–Leu324, Leu343–Phe363, Leu377–Thr399, Ala403–Trp425, Thr439–Tyr459, and Trp469–Leu489.

The protein belongs to the major facilitator superfamily.

Its subcellular location is the membrane. The protein operates within secondary metabolite biosynthesis. Its function is as follows. MFS efflux pump; part of the gene cluster that mediates the biosynthesis of aspercryptins, linear lipopeptides built from six amino acids including 2 highly unusual and nonproteogenic amino acids, 2-amino-octanoic acid (2aoa) and 2-amino-dodecanol (2adol). The protein is MFS efflux pump atnC of Emericella nidulans (strain FGSC A4 / ATCC 38163 / CBS 112.46 / NRRL 194 / M139) (Aspergillus nidulans).